The following is a 473-amino-acid chain: Glutamate-1-semialdehyde 2,1-aminomutase, chloroplastic (473 aa).

Residues 1–37 (MSATLTGSGTALGFSCSSKISKRVSSSPSTRCSIKMS) constitute a chloroplast transit peptide. Position 313 is an N6-(pyridoxal phosphate)lysine (lysine 313).

This sequence belongs to the class-III pyridoxal-phosphate-dependent aminotransferase family. HemL subfamily. In terms of assembly, homodimer. Pyridoxal 5'-phosphate is required as a cofactor.

The protein resides in the plastid. It is found in the chloroplast. It carries out the reaction (S)-4-amino-5-oxopentanoate = 5-aminolevulinate. Its pathway is porphyrin-containing compound metabolism; protoporphyrin-IX biosynthesis; 5-aminolevulinate from L-glutamyl-tRNA(Glu): step 2/2. It participates in porphyrin-containing compound metabolism; chlorophyll biosynthesis. The protein is Glutamate-1-semialdehyde 2,1-aminomutase, chloroplastic (GSA) of Brassica napus (Rape).